Consider the following 182-residue polypeptide: Small ribosomal subunit protein uS4c (182 aa).

The disordered stretch occupies residues 13-32 (GLTSKRPRSGSDLKNPLRSG). In terms of domain architecture, S4 RNA-binding spans 82 to 143 (MRLDNILFRL…KQRSKALIQN (62 aa)).

It belongs to the universal ribosomal protein uS4 family. As to quaternary structure, part of the 30S ribosomal subunit. Contacts protein S5. The interaction surface between S4 and S5 is involved in control of translational fidelity.

It is found in the plastid. The protein resides in the chloroplast. Functionally, one of the primary rRNA binding proteins, it binds directly to 16S rRNA where it nucleates assembly of the body of the 30S subunit. In terms of biological role, with S5 and S12 plays an important role in translational accuracy. The protein is Small ribosomal subunit protein uS4c (rps4) of Scadoxus puniceus (Paintbrush lily).